A 487-amino-acid polypeptide reads, in one-letter code: ATP synthase subunit beta, plastid (487 aa).

ATP is bound at residue 169-176; the sequence is GGAGVGKT.

It belongs to the ATPase alpha/beta chains family. In terms of assembly, F-type ATPases have 2 components, CF(1) - the catalytic core - and CF(0) - the membrane proton channel. CF(1) has five subunits: alpha(3), beta(3), gamma(1), delta(1), epsilon(1). CF(0) has four main subunits: a(1), b(1), b'(1) and c(9-12).

The protein resides in the plastid membrane. It catalyses the reaction ATP + H2O + 4 H(+)(in) = ADP + phosphate + 5 H(+)(out). In terms of biological role, produces ATP from ADP in the presence of a proton gradient across the membrane. The catalytic sites are hosted primarily by the beta subunits. In Cuscuta pentagona (Five-angled dodder), this protein is ATP synthase subunit beta, plastid (atpB).